The chain runs to 602 residues: Zinc finger MYND domain-containing protein 11 (602 aa).

The SAMD1-like winged helix (WH) domain maps to 6–82 (KRRQADTKAI…CKGSKAGIEQ (77 aa)). A PHD-type zinc finger spans residues 100 to 148 (DWYCFECHLPGEVLICDLCFRVYHSKCLSDEFRLRDSSSHWQCPVCRSI). Positions 149–255 (KKKHSNKQEM…KDTCHELDEL (107 aa)) constitute a Bromo domain. Zn(2+) contacts are provided by cysteine 258, cysteine 261, cysteine 277, and histidine 281. The PWWP domain occupies 280–331 (NHELVWAKMKGFGFWPAKVMQKEDNQVDVRFFGHHHQRAWIPSENIQDITVN). The segment at 291–310 (FGFWPAKVMQKEDNQVDVRF) is aromatic cage required for H3.3K36me3-specific binding. Lysine 366 is covalently cross-linked (Glycyl lysine isopeptide (Lys-Gly) (interchain with G-Cter in SUMO2)). The tract at residues 366 to 461 (KNEDRGEEEA…HRSTQTTSDG (96 aa)) is disordered. Positions 394–400 (RAKKGRR) match the Nuclear localization signal motif. Glycyl lysine isopeptide (Lys-Gly) (interchain with G-Cter in SUMO2) cross-links involve residues lysine 407 and lysine 408. A Phosphoserine modification is found at serine 421. Residues 435–461 (SVSTQTKKLSASSPRMLHRSTQTTSDG) show a composition bias toward polar residues. 8 residues coordinate Zn(2+): cysteine 563, cysteine 566, cysteine 574, cysteine 575, cysteine 581, cysteine 585, histidine 594, and cysteine 598. Residues 563 to 598 (CYNCEEEAMYHCCWNTSYCSIKCQQEHWHAEHKRTC) form an MYND-type zinc finger.

Homooligomer; forms homooligomers via its C-terminus. Interacts with histone H3.3 trimethylated at 'Lys-36' (H3.3K36me3). Interacts (via MYND-type zinc finger) with NCOR1. Interacts (via MYND-type zinc finger) with MGA protein (via PXLXP motif). Interacts (via MYND-type zinc finger) with EZH2. Interacts with EMSY and E2F6. Interacts with PIAS1 and UBE2I. Ubiquitinated, leading to proteasomal degradation. Post-translationally, sumoylated following its interaction with PIAS1 and UBE2I.

The protein localises to the nucleus. Its subcellular location is the chromosome. In terms of biological role, chromatin reader that specifically recognizes and binds histone H3.3 trimethylated at 'Lys-36' (H3.3K36me3) and regulates RNA polymerase II elongation. Does not bind other histone H3 subtypes (H3.1 or H3.2). Colocalizes with highly expressed genes and functions as a transcription corepressor by modulating RNA polymerase II at the elongation stage. Binds non-specifically to dsDNA. Acts as a tumor-suppressor by repressing a transcriptional program essential for tumor cell growth. The protein is Zinc finger MYND domain-containing protein 11 (Zmynd11) of Mus musculus (Mouse).